The following is a 158-amino-acid chain: Endoribonuclease YbeY (158 aa).

The Zn(2+) site is built by H118, H122, and H128.

This sequence belongs to the endoribonuclease YbeY family. Zn(2+) is required as a cofactor.

It localises to the cytoplasm. Its function is as follows. Single strand-specific metallo-endoribonuclease involved in late-stage 70S ribosome quality control and in maturation of the 3' terminus of the 16S rRNA. This Bartonella quintana (strain Toulouse) (Rochalimaea quintana) protein is Endoribonuclease YbeY.